A 262-amino-acid chain; its full sequence is Outer membrane protein assembly factor BamD (262 aa).

The N-terminal stretch at 1–18 (MRKIKSLALLAVAALVIG) is a signal peptide. Cysteine 19 carries the N-palmitoyl cysteine lipid modification. The S-diacylglycerol cysteine moiety is linked to residue cysteine 19.

The protein belongs to the BamD family. As to quaternary structure, part of the Bam complex.

It is found in the cell outer membrane. In terms of biological role, part of the outer membrane protein assembly complex, which is involved in assembly and insertion of beta-barrel proteins into the outer membrane. The sequence is that of Outer membrane protein assembly factor BamD from Haemophilus influenzae (strain ATCC 51907 / DSM 11121 / KW20 / Rd).